Reading from the N-terminus, the 243-residue chain is Vesicle-associated membrane protein-associated protein B (243 aa).

Ala2 bears the N-acetylalanine mark. The Cytoplasmic segment spans residues 2–218 (AKVEQVLSLE…PAPATPGKEE (217 aa)). Positions 7-124 (VLSLEPQHEL…MDSKLRCVFE (118 aa)) constitute an MSP domain. Residue Ser146 is modified to Phosphoserine. Lys147 is covalently cross-linked (Glycyl lysine isopeptide (Lys-Gly) (interchain with G-Cter in SUMO1)). Thr150 is subject to Phosphothreonine. Phosphoserine is present on residues Ser158 and Ser159. A coiled-coil region spans residues 161–196 (LDDTEVKKVMEECKRLQSEVQRLREENKQLKEEDGL). The segment covering 185 to 197 (EENKQLKEEDGLR) has biased composition (basic and acidic residues). The interval 185 to 217 (EENKQLKEEDGLRMRKPVLSNSPAPAPATPGKE) is disordered. At Ser206 the chain carries Phosphoserine. Residues 219–239 (GLSTRLLALVVLFFIVGVIIG) traverse the membrane as a helical; Anchor for type IV membrane protein segment.

The protein belongs to the VAMP-associated protein (VAP) (TC 9.B.17) family. As to quaternary structure, homodimer, and heterodimer with VAPA. Interacts with VAMP1 and VAMP2. Interacts (via MSP domain) with ZFYVE27. Interacts with RMDN3. Interacts with KIF5A in a ZFYVE27-dependent manner. Interacts (via MSP domain) with STARD3 (via phospho-FFAT motif). Interacts with STARD3NL (via FFAT motif). Interacts with CERT1. Interacts with PLEKHA3 and SACM1L to form a ternary complex. Interacts with VPS13A (via FFAT motif). Interacts with RB1CC1 (via phosphorylated FFAT motif), MIGA2 (via phosphorylated FFAT motif), RMDN3 (via phosphorylated FFAT motif), OSBPL1A (via FFAT motif), KCNB1 (via phosphorylated FFAT motif) and KCNB2 (via phosphorylated FFAT motif). Interacts (via MSP domain) with WDR44 (via FFAT motif); the interactions connect the endoplasmic reticulum (ER) with the endosomal tubule.

The protein resides in the endoplasmic reticulum membrane. In terms of biological role, endoplasmic reticulum (ER)-anchored protein that mediates the formation of contact sites between the ER and endosomes via interaction with FFAT motif-containing proteins such as STARD3 or WDR44. Interacts with STARD3 in a FFAT motif phosphorylation dependent manner. Via interaction with WDR44 participates in neosynthesized protein export. Participates in the endoplasmic reticulum unfolded protein response (UPR) by inducing ERN1/IRE1 activity. Involved in cellular calcium homeostasis regulation. The protein is Vesicle-associated membrane protein-associated protein B of Sus scrofa (Pig).